The chain runs to 299 residues: uncharacterized protein (299 aa).

8 consecutive transmembrane segments (helical) span residues 13–33, 36–56, 79–99, 112–132, 151–171, 201–221, 241–261, and 267–287; these read ILFLFSHSFSSFLLPFQLHFM, AFVIGLIAALLAGIVGSFLML, SFGIPLIFGALLASIISVIII, TAIGIVFASFFGLGILLISVI, ITSEDLQNTSIILAIILLFFI, FLILVALTIIVSMKAIGVILV, YVILTSSIIGVSCSFSGMLLS, and PPGPTIVLITSLIFFILFLII.

This sequence belongs to the ABC-3 integral membrane protein family.

It is found in the plastid. It localises to the cyanelle membrane. This is an uncharacterized protein from Cyanophora paradoxa.